The following is a 266-amino-acid chain: 15-hydroxyprostaglandin dehydrogenase [NAD(+)] (266 aa).

NAD(+)-binding positions include 12-20 (GAAQGIGRA), 36-37 (DW), 63-65 (CDV), and Asn91. Positions 138 and 148 each coordinate substrate. The active-site Proton acceptor is the Tyr151. Residues 151-155 (YCASK) and 186-188 (VNT) contribute to the NAD(+) site.

This sequence belongs to the short-chain dehydrogenases/reductases (SDR) family. As to quaternary structure, homodimer. As to expression, detected in colon epithelium (at protein level).

The protein localises to the cytoplasm. It catalyses the reaction prostaglandin E2 + NAD(+) = 15-oxoprostaglandin E2 + NADH + H(+). It carries out the reaction (15S)-hydroxy-(5Z,8Z,11Z,13E)-eicosatetraenoate + NAD(+) = 15-oxo-(5Z,8Z,11Z,13E)-eicosatetraenoate + NADH + H(+). The catalysed reaction is (11R)-hydroxy-(5Z,8Z,12E,14Z)-eicosatetraenoate + NAD(+) = 11-oxo-(5Z,8Z,12E,14Z)-eicosatetraenoate + NADH + H(+). The enzyme catalyses lipoxin A4 + NAD(+) = 15-oxo-(5S,6R)-dihydroxy-(7E,9E,11Z,13E)-eicosatetraenoate + NADH + H(+). It catalyses the reaction 15-oxo-(5S,6R)-dihydroxy-(7E,9E,11Z)-eicosatrienoate + NADH + H(+) = (5S,6R,15S)-trihydroxy-(7E,9E,11Z)-eicosatrienoate + NAD(+). It carries out the reaction prostaglandin A1 + NAD(+) = 15-oxo-prostaglandin A1 + NADH + H(+). The catalysed reaction is prostaglandin E1 + NAD(+) = 15-oxoprostaglandin E1 + NADH + H(+). The enzyme catalyses 14-hydroxy-(4Z,7Z,10Z,12E,16Z,19Z)-docosahexaenoate + NAD(+) = 14-oxo-(4Z,7Z,10Z,12E,16Z,19Z)-docosahexaenoate + NADH + H(+). It catalyses the reaction resolvin E1 + NAD(+) = 18-oxo-resolvin E1 + NADH + H(+). It carries out the reaction resolvin D1 + NAD(+) = 8-oxoresolvin D1 + NADH + H(+). The catalysed reaction is resolvin D1 + NAD(+) = 17-oxoresolvin D1 + NADH + H(+). The enzyme catalyses resolvin D2 + NAD(+) = 7-oxoresolvin D2 + NADH + H(+). It catalyses the reaction resolvin D2 + NAD(+) = 16-oxoresolvin D2 + NADH + H(+). Its function is as follows. Catalyzes the NAD-dependent dehydrogenation (oxidation) of a broad array of hydroxylated polyunsaturated fatty acids (mainly eicosanoids and docosanoids, including prostaglandins, lipoxins and resolvins), yielding their corresponding keto (oxo) metabolites. Decreases the levels of the pro-proliferative prostaglandins such as prostaglandin E2 (whose activity is increased in cancer because of an increase in the expression of cyclooxygenase 2) and generates oxo-fatty acid products that can profoundly influence cell function by abrogating pro-inflammatory cytokine expression. Converts resolvins E1, D1 and D2 to their oxo products, which represents a mode of resolvin inactivation. Resolvin E1 plays important roles during the resolution phase of acute inflammation, while resolvins D1 and D2 have a unique role in obesity-induced adipose inflammation. This chain is 15-hydroxyprostaglandin dehydrogenase [NAD(+)], found in Homo sapiens (Human).